The sequence spans 334 residues: Transcription factor TGA2.1 (334 aa).

Polar residues predominate over residues 1 to 13 (MADASSRTDTSIV). The segment at 1-49 (MADASSRTDTSIVVDNDDKNHQLENGHSGAVMASNSSDRSDRSDKLMDQ) is disordered. The span at 38 to 49 (DRSDRSDKLMDQ) shows a compositional bias: basic and acidic residues. One can recognise a bZIP domain in the interval 48 to 92 (DQKTIRRLAQNREAARKSRLRKKAYVQQLESSKLKLAQLEQELQK). A basic motif region spans residues 50–70 (KTIRRLAQNREAARKSRLRKK). The leucine-zipper stretch occupies residues 76–90 (LESSKLKLAQLEQEL). The region spanning 115–331 (ALTFDLEYTR…RALSSLWLAR (217 aa)) is the DOG1 domain.

The protein belongs to the bZIP family. In terms of assembly, interacts with NPR1/NH1 and NPR3/NH3.

Its subcellular location is the nucleus. Plays a negative role in rice basal defense responses to the bacterial blight pathogen Xanthomomas oryzae pv. oryzae (Xoo). May function in both positive and negative regulation of rice defense genes. Binds DNA in vitro. Acts as a transcriptional activator when bound to NPR1/NH1 in vitro. Binds to the promoter sequence of CRK10 in vitro. The protein is Transcription factor TGA2.1 of Oryza sativa subsp. japonica (Rice).